The chain runs to 622 residues: Probable potassium transport system protein Kup 1 (622 aa).

The next 12 membrane-spanning stretches (helical) occupy residues 7–27 (LLVLALGSVGVVYGDIGTSPL), 50–70 (LISLMIWALTIIVTIKYVLFL), 96–116 (TAILFFMGIAGAALFIGDAMI), 132–152 (VTPALSDYVVPIAVVILLLLF), 165–185 (FFGPITLIWFVVMGTIGFVHI), 210–230 (VGIVVLGAVFLTVTGAEALYA), 244–264 (WFTVVFPALTLNYLGQGAFVL), 282–302 (ALLPAVILATAATIIASQAVI), 334–354 (IYLPNVNTLLMFGVMALVFLF), 360–380 (LATAYGISVTGAMVVTTVLSF), 391–411 (TWWAAGALLPLFVLEFVFLGA), and 416–436 (IHDGGYVPILIAATFIVIMWT).

It belongs to the HAK/KUP transporter (TC 2.A.72) family.

It localises to the cell inner membrane. It catalyses the reaction K(+)(in) + H(+)(in) = K(+)(out) + H(+)(out). In terms of biological role, transport of potassium into the cell. Likely operates as a K(+):H(+) symporter. This is Probable potassium transport system protein Kup 1 from Rhizobium meliloti (strain 1021) (Ensifer meliloti).